We begin with the raw amino-acid sequence, 234 residues long: Proteasome subunit alpha type-2 (234 aa).

Residue A2 is modified to N-acetylalanine. The residue at position 121 (Y121) is a Phosphotyrosine.

The protein belongs to the peptidase T1A family. The 26S proteasome consists of a 20S proteasome core and two 19S regulatory subunits. The 20S proteasome core is composed of 28 subunits that are arranged in four stacked rings, resulting in a barrel-shaped structure. The two end rings are each formed by seven alpha subunits, and the two central rings are each formed by seven beta subunits. The catalytic chamber with the active sites is on the inside of the barrel.

It is found in the cytoplasm. The protein localises to the nucleus. Its function is as follows. The proteasome is a multicatalytic proteinase complex which is characterized by its ability to cleave peptides with Arg, Phe, Tyr, Leu, and Glu adjacent to the leaving group at neutral or slightly basic pH. The proteasome has an ATP-dependent proteolytic activity. PSMA2 may have a potential regulatory effect on another component(s) of the proteasome complex through tyrosine phosphorylation. In Carassius auratus (Goldfish), this protein is Proteasome subunit alpha type-2 (psma2).